The sequence spans 448 residues: C4-dicarboxylate transport protein (448 aa).

A run of 9 helical transmembrane segments spans residues Ser13–Pro33, Leu49–Met69, Leu81–Val101, Ala149–Leu169, Ile193–Ile213, Leu227–Ser247, Val294–Leu314, Thr336–Phe356, and Ile357–Ile377.

Belongs to the dicarboxylate/amino acid:cation symporter (DAACS) (TC 2.A.23) family.

The protein localises to the cell inner membrane. In terms of biological role, responsible for the transport of dicarboxylates such as succinate, fumarate, and malate from the periplasm across the membrane. The chain is C4-dicarboxylate transport protein from Albidiferax ferrireducens (strain ATCC BAA-621 / DSM 15236 / T118) (Rhodoferax ferrireducens).